The sequence spans 153 residues: Histone H2B.4 (153 aa).

Composition is skewed to basic and acidic residues over residues 1–28 (MAPKAEKKPAAKKPAEEEPAAEKAEKAP) and 36–53 (EKRLPAGKAEKGSGEGKK). Positions 1–61 (MAPKAEKKPA…KKAGRKKAKK (61 aa)) are disordered. Residues lysine 7 and lysine 37 each carry the N6-acetyllysine modification. Lysine 149 is covalently cross-linked (Glycyl lysine isopeptide (Lys-Gly) (interchain with G-Cter in ubiquitin)).

It belongs to the histone H2B family. In terms of assembly, the nucleosome is a histone octamer containing two molecules each of H2A, H2B, H3 and H4 assembled in one H3-H4 heterotetramer and two H2A-H2B heterodimers. The octamer wraps approximately 147 bp of DNA. In terms of processing, can be acetylated to form H2BK6ac and H2BK33ac. Post-translationally, monoubiquitinated by BRE1 to form H2BK143ub1 and deubiquitinated by UBP26. Required for heterochromatic histone H3 di- and trimethylation at H3K4me. May give a specific tag for epigenetic transcriptional activation.

It localises to the nucleus. Its subcellular location is the chromosome. In terms of biological role, core component of nucleosome. Nucleosomes wrap and compact DNA into chromatin, limiting DNA accessibility to the cellular machineries which require DNA as a template. Histones thereby play a central role in transcription regulation, DNA repair, DNA replication and chromosomal stability. DNA accessibility is regulated via a complex set of post-translational modifications of histones, also called histone code, and nucleosome remodeling. In Oryza sativa subsp. indica (Rice), this protein is Histone H2B.4 (H2B.4).